The chain runs to 432 residues: Adenylosuccinate synthetase (432 aa).

Residues Gly-12–Lys-18 and Gly-40–Thr-42 each bind GTP. Residue Asp-13 is the Proton acceptor of the active site. Residues Asp-13 and Gly-40 each contribute to the Mg(2+) site. Residues Asp-13–Lys-16, Asn-38–His-41, Thr-132, Arg-146, Gln-226, Thr-241, and Arg-305 contribute to the IMP site. Residue His-41 is the Proton donor of the active site. Residue Thr-301–Arg-307 participates in substrate binding. Residues Arg-307, Lys-333 to Asp-335, and Ser-415 to Ser-417 contribute to the GTP site.

The protein belongs to the adenylosuccinate synthetase family. As to quaternary structure, homodimer. Mg(2+) serves as cofactor.

Its subcellular location is the cytoplasm. The catalysed reaction is IMP + L-aspartate + GTP = N(6)-(1,2-dicarboxyethyl)-AMP + GDP + phosphate + 2 H(+). It functions in the pathway purine metabolism; AMP biosynthesis via de novo pathway; AMP from IMP: step 1/2. Its function is as follows. Plays an important role in the de novo pathway of purine nucleotide biosynthesis. Catalyzes the first committed step in the biosynthesis of AMP from IMP. This chain is Adenylosuccinate synthetase, found in Sinorhizobium medicae (strain WSM419) (Ensifer medicae).